An 82-amino-acid polypeptide reads, in one-letter code: Small ribosomal subunit protein bS16 (82 aa).

The protein belongs to the bacterial ribosomal protein bS16 family.

The polypeptide is Small ribosomal subunit protein bS16 (Rippkaea orientalis (strain PCC 8801 / RF-1) (Cyanothece sp. (strain PCC 8801))).